A 236-amino-acid chain; its full sequence is ATP synthase subunit a (236 aa).

The next 5 helical transmembrane spans lie at 17–37 (LSDM…AVAA), 75–95 (FLTL…LGLP), 112–132 (DATV…YYGV), 174–194 (IYAG…YGVL), and 208–228 (FSIF…MVYM).

It belongs to the ATPase A chain family. As to quaternary structure, F-type ATPases have 2 components, CF(1) - the catalytic core - and CF(0) - the membrane proton channel. CF(1) has five subunits: alpha(3), beta(3), gamma(1), delta(1), epsilon(1). CF(0) has three main subunits: a(1), b(2) and c(9-12). The alpha and beta chains form an alternating ring which encloses part of the gamma chain. CF(1) is attached to CF(0) by a central stalk formed by the gamma and epsilon chains, while a peripheral stalk is formed by the delta and b chains.

The protein localises to the cell membrane. Key component of the proton channel; it plays a direct role in the translocation of protons across the membrane. The polypeptide is ATP synthase subunit a (Geobacillus stearothermophilus (Bacillus stearothermophilus)).